Here is a 1462-residue protein sequence, read N- to C-terminus: DNA polymerase alpha catalytic subunit (1462 aa).

Disordered regions lie at residues 1–33 (MAPV…GRQE) and 98–123 (DLED…KRNV). The span at 20–29 (RARREKKSKK) shows a compositional bias: basic residues. Basic and acidic residues predominate over residues 106–116 (ADEKGKDGKAR). Thr-174 is modified (phosphothreonine). Ser-186, Ser-190, and Ser-209 each carry phosphoserine. Lys-224 is subject to N6-acetyllysine. The tract at residues 232–251 (DVQVESTEEEQESGAMEFED) is disordered. Thr-406 carries the post-translational modification Phosphothreonine. The DNA-binding stretch occupies residues 650–715 (RINVCKAPHW…YHLSELVQQI (66 aa)). Position 970 is an N6-succinyllysine (Lys-970). The segment at 1245–1376 (QFRVHHYHKD…TGPLCPACMK (132 aa)) is DNA-binding. Residues Cys-1283, Cys-1286, Cys-1310, Cys-1315, Cys-1348, Cys-1353, Cys-1371, and Cys-1374 each contribute to the Zn(2+) site. The segment at 1283–1318 (CPTCGTENIYDNVFDGSGTDMEPSLYRCSNIDCKAS) adopts a CysA-type zinc-finger fold. The CysB motif signature appears at 1348–1374 (CEEPTCRNRTRHLPLQFSRTGPLCPAC).

Belongs to the DNA polymerase type-B family. As to quaternary structure, component of the alpha DNA polymerase complex (also known as the alpha DNA polymerase-primase complex) consisting of four subunits: the catalytic subunit POLA1, the regulatory subunit POLA2, and the primase complex subunits PRIM1 and PRIM2 respectively. Interacts with PARP1; this interaction functions as part of the control of replication fork progression. Interacts with MCM10 and WDHD1; these interactions recruit the polymerase alpha complex to the pre-replicative complex bound to DNA. Interacts with RPA1; this interaction stabilizes the replicative complex and reduces the misincorporation rate of DNA polymerase alpha by acting as a fidelity clamp. (Microbial infection) Interacts with SV40 Large T antigen; this interaction allows viral DNA replication. In terms of assembly, (Microbial infection) Interacts with herpes simplex virus 1/HHV-1 replication origin-binding protein UL9. Post-translationally, a 165 kDa form is probably produced by proteolytic cleavage at Lys-124.

The protein resides in the nucleus. Its subcellular location is the cytoplasm. It localises to the cytosol. The enzyme catalyses DNA(n) + a 2'-deoxyribonucleoside 5'-triphosphate = DNA(n+1) + diphosphate. With respect to regulation, autoinhibited in apo-primosome, where the zinc motif of POLA1 and oligonucleotide/olicosaccharide-binding domain of POLA2 are placed into the active site blocking RNA:DNA duplex entry. Its function is as follows. Catalytic subunit of the DNA polymerase alpha complex (also known as the alpha DNA polymerase-primase complex) which plays an essential role in the initiation of DNA synthesis. During the S phase of the cell cycle, the DNA polymerase alpha complex (composed of a catalytic subunit POLA1, a regulatory subunit POLA2 and two primase subunits PRIM1 and PRIM2) is recruited to DNA at the replicative forks via direct interactions with MCM10 and WDHD1. The primase subunit of the polymerase alpha complex initiates DNA synthesis by oligomerising short RNA primers on both leading and lagging strands. These primers are initially extended by the polymerase alpha catalytic subunit and subsequently transferred to polymerase delta and polymerase epsilon for processive synthesis on the lagging and leading strand, respectively. The reason this transfer occurs is because the polymerase alpha has limited processivity and lacks intrinsic 3' exonuclease activity for proofreading error, and therefore is not well suited for replicating long complexes. In the cytosol, responsible for a substantial proportion of the physiological concentration of cytosolic RNA:DNA hybrids, which are necessary to prevent spontaneous activation of type I interferon responses. This is DNA polymerase alpha catalytic subunit (POLA1) from Homo sapiens (Human).